A 252-amino-acid polypeptide reads, in one-letter code: Thiamine thiazole synthase (252 aa).

NAD(+) is bound by residues Ser-35, 54–55, Gly-62, Val-126, and 152–154; these read EK and HVD. Asp-154 and His-169 together coordinate Fe cation. Position 217 (Met-217) interacts with NAD(+). Residue Arg-227 coordinates glycine.

The protein belongs to the THI4 family. Homooctamer; tetramer of dimers. Fe(2+) serves as cofactor.

It catalyses the reaction hydrogen sulfide + glycine + NAD(+) = ADP-5-ethyl-4-methylthiazole-2-carboxylate + nicotinamide + 3 H2O + H(+). Its pathway is cofactor biosynthesis; thiamine diphosphate biosynthesis. In terms of biological role, involved in the biosynthesis of the thiazole moiety of thiamine. Catalyzes the conversion of NAD and glycine to adenosine diphosphate 5-(2-hydroxyethyl)-4-methylthiazole-2-carboxylate (ADT), an adenylated thiazole intermediate, using free sulfide as a source of sulfur. This is Thiamine thiazole synthase from Pyrococcus furiosus (strain ATCC 43587 / DSM 3638 / JCM 8422 / Vc1).